The sequence spans 362 residues: MAMSAIGFEGYEKRLEVTFFEPGLFLDTQGKGLRALAKSQIDEILQPAECTIVSSLSNDQLDSYVLSESSLFIFPYKIVIKTCGTTKLLLSIEPLLRLAGELSLDVKAVRYTRGSFLCPGGQPFPHRNFSEEVSVLDGHFAKLGLSSVAYLMGNDDETKKWHVYSASSANSNNKNNVYTLEMCMTGLDKDKASVFYKNESSSAGSMTDNSGIRKILPQSQICDFEFEPCGYSMNSIEGDAISTIHVTPEDGFSYASFEAVGYDFTTMDLSHLVSKVLTCFKPKQFSVAVHSTVAQKSYDSGLSVDLDDYGCKESTMESLGEERGTVMYQRFEKLGRYCGSPRSTLKCEWSSNSSCNSEDEKE.

Active-site residues include Glu-9 and Glu-12. Glu-68 contacts substrate. Catalysis depends on Ser-69, which acts as the Schiff-base intermediate with substrate; via pyruvic acid. A Pyruvic acid (Ser); by autocatalysis modification is found at Ser-69. The active-site Proton donor; for catalytic activity is the Cys-83. Catalysis depends on proton acceptor; for processing activity residues Ser-232 and His-245. Residue Glu-249 participates in substrate binding.

It belongs to the eukaryotic AdoMetDC family. Pyruvate serves as cofactor. Post-translationally, is synthesized initially as an inactive proenzyme. Formation of the active enzyme involves a self-maturation process in which the active site pyruvoyl group is generated from an internal serine residue via an autocatalytic post-translational modification. Two non-identical subunits are generated from the proenzyme in this reaction, and the pyruvate is formed at the N-terminus of the alpha chain, which is derived from the carboxyl end of the proenzyme. The post-translation cleavage follows an unusual pathway, termed non-hydrolytic serinolysis, in which the side chain hydroxyl group of the serine supplies its oxygen atom to form the C-terminus of the beta chain, while the remainder of the serine residue undergoes an oxidative deamination to produce ammonia and the pyruvoyl group blocking the N-terminus of the alpha chain.

It carries out the reaction S-adenosyl-L-methionine + H(+) = S-adenosyl 3-(methylsulfanyl)propylamine + CO2. It functions in the pathway amine and polyamine biosynthesis; S-adenosylmethioninamine biosynthesis; S-adenosylmethioninamine from S-adenosyl-L-methionine: step 1/1. Functionally, essential for biosynthesis of the polyamines spermidine and spermine. Essential for polyamine homeostasis, and normal plant embryogenesis, growth and development. The protein is S-adenosylmethionine decarboxylase proenzyme 2 of Arabidopsis thaliana (Mouse-ear cress).